The primary structure comprises 639 residues: Probable endo-1,3(4)-beta-glucanase ACLA_073210 (639 aa).

Positions 1–21 (MAPSSLLLSVGSLIASSLASA) are cleaved as a signal peptide. Residues 26 to 290 (IREQSQSYQL…WAGNVFGESG (265 aa)) form the GH16 domain. Residue Asn-65 is glycosylated (N-linked (GlcNAc...) asparagine). Glu-146 serves as the catalytic Nucleophile. Glu-151 acts as the Proton donor in catalysis. Disordered regions lie at residues 337–384 (TVAS…TVAE) and 442–545 (QSSS…GSSI). Over residues 339–348 (ASPNTASEVH) the composition is skewed to polar residues. Composition is skewed to low complexity over residues 362-376 (PTVP…VPPA) and 478-488 (TTTEAVAETET). Ala-617 is lipidated: GPI-anchor amidated alanine. A propeptide spans 618–639 (GARKLSVGLSGLVGALAVAALA) (removed in mature form).

The protein belongs to the glycosyl hydrolase 16 family.

Its subcellular location is the cell membrane. It carries out the reaction Endohydrolysis of (1-&gt;3)- or (1-&gt;4)-linkages in beta-D-glucans when the glucose residue whose reducing group is involved in the linkage to be hydrolyzed is itself substituted at C-3.. In terms of biological role, mixed-linked glucanase involved in the degradation of complex natural cellulosic substrates. The sequence is that of Probable endo-1,3(4)-beta-glucanase ACLA_073210 from Aspergillus clavatus (strain ATCC 1007 / CBS 513.65 / DSM 816 / NCTC 3887 / NRRL 1 / QM 1276 / 107).